The primary structure comprises 126 residues: NADH-quinone oxidoreductase subunit A (126 aa).

The next 3 membrane-spanning stretches (helical) occupy residues 16-36 (ILVL…AAAI), 73-93 (ILFI…VAFG), and 95-115 (MSMT…VGFA).

It belongs to the complex I subunit 3 family. As to quaternary structure, NDH-1 is composed of 14 different subunits. Subunits NuoA, H, J, K, L, M, N constitute the membrane sector of the complex.

It is found in the cell inner membrane. The catalysed reaction is a quinone + NADH + 5 H(+)(in) = a quinol + NAD(+) + 4 H(+)(out). In terms of biological role, NDH-1 shuttles electrons from NADH, via FMN and iron-sulfur (Fe-S) centers, to quinones in the respiratory chain. The immediate electron acceptor for the enzyme in this species is believed to be ubiquinone. Couples the redox reaction to proton translocation (for every two electrons transferred, four hydrogen ions are translocated across the cytoplasmic membrane), and thus conserves the redox energy in a proton gradient. This Rhodobacter capsulatus (Rhodopseudomonas capsulata) protein is NADH-quinone oxidoreductase subunit A.